We begin with the raw amino-acid sequence, 189 residues long: Elongation factor P (189 aa).

This sequence belongs to the elongation factor P family.

Its subcellular location is the cytoplasm. It functions in the pathway protein biosynthesis; polypeptide chain elongation. Functionally, involved in peptide bond synthesis. Stimulates efficient translation and peptide-bond synthesis on native or reconstituted 70S ribosomes in vitro. Probably functions indirectly by altering the affinity of the ribosome for aminoacyl-tRNA, thus increasing their reactivity as acceptors for peptidyl transferase. The sequence is that of Elongation factor P from Ehrlichia canis (strain Jake).